The following is a 319-amino-acid chain: Beta-ketoacyl-[acyl-carrier-protein] synthase III (319 aa).

Catalysis depends on residues cysteine 114 and histidine 246. Positions 247–251 (QANIR) are ACP-binding. Asparagine 276 is an active-site residue.

Belongs to the thiolase-like superfamily. FabH family. Homodimer.

The protein localises to the cytoplasm. The catalysed reaction is malonyl-[ACP] + acetyl-CoA + H(+) = 3-oxobutanoyl-[ACP] + CO2 + CoA. The protein operates within lipid metabolism; fatty acid biosynthesis. Catalyzes the condensation reaction of fatty acid synthesis by the addition to an acyl acceptor of two carbons from malonyl-ACP. Catalyzes the first condensation reaction which initiates fatty acid synthesis and may therefore play a role in governing the total rate of fatty acid production. Possesses both acetoacetyl-ACP synthase and acetyl transacylase activities. Its substrate specificity determines the biosynthesis of branched-chain and/or straight-chain of fatty acids. This chain is Beta-ketoacyl-[acyl-carrier-protein] synthase III, found in Thiobacillus denitrificans (strain ATCC 25259 / T1).